The following is a 185-amino-acid chain: GTP cyclohydrolase 1 (185 aa).

Residues Cys-75, His-78, and Cys-146 each coordinate Zn(2+).

It belongs to the GTP cyclohydrolase I family. In terms of assembly, toroid-shaped homodecamer, composed of two pentamers of five dimers.

It carries out the reaction GTP + H2O = 7,8-dihydroneopterin 3'-triphosphate + formate + H(+). It participates in cofactor biosynthesis; 7,8-dihydroneopterin triphosphate biosynthesis; 7,8-dihydroneopterin triphosphate from GTP: step 1/1. The chain is GTP cyclohydrolase 1 from Methylococcus capsulatus (strain ATCC 33009 / NCIMB 11132 / Bath).